Reading from the N-terminus, the 282-residue chain is Sirohydrochlorin cobaltochelatase CbiKC (282 aa).

Catalysis depends on histidine 166, which acts as the Proton acceptor. Histidine 166 and histidine 228 together coordinate Co(2+).

Belongs to the CbiK family.

The protein localises to the cytoplasm. The enzyme catalyses Co-sirohydrochlorin + 2 H(+) = sirohydrochlorin + Co(2+). The catalysed reaction is siroheme + 2 H(+) = sirohydrochlorin + Fe(2+). The protein operates within cofactor biosynthesis; adenosylcobalamin biosynthesis; cob(II)yrinate a,c-diamide from sirohydrochlorin (anaerobic route): step 1/10. It functions in the pathway porphyrin-containing compound metabolism; siroheme biosynthesis; siroheme from sirohydrochlorin: step 1/1. Functionally, catalyzes the insertion of Co(2+) into sirohydrochlorin as part of the anaerobic pathway to cobalamin biosynthesis. To a lesser extent, is also able to insert Fe(2+) into sirohydrochlorin, yielding siroheme. The protein is Sirohydrochlorin cobaltochelatase CbiKC (cbiKc) of Nitratidesulfovibrio vulgaris (strain ATCC 29579 / DSM 644 / CCUG 34227 / NCIMB 8303 / VKM B-1760 / Hildenborough) (Desulfovibrio vulgaris).